Here is a 562-residue protein sequence, read N- to C-terminus: Formate--tetrahydrofolate ligase (562 aa).

Residue 71–78 participates in ATP binding; that stretch reads TPAGEGKS.

It belongs to the formate--tetrahydrofolate ligase family.

The enzyme catalyses (6S)-5,6,7,8-tetrahydrofolate + formate + ATP = (6R)-10-formyltetrahydrofolate + ADP + phosphate. It functions in the pathway one-carbon metabolism; tetrahydrofolate interconversion. This chain is Formate--tetrahydrofolate ligase, found in Bacillus cereus (strain AH187).